Consider the following 90-residue polypeptide: Large ribosomal subunit protein uL23c (90 aa).

This sequence belongs to the universal ribosomal protein uL23 family. Part of the 50S ribosomal subunit.

It is found in the plastid. The protein localises to the chloroplast. Functionally, binds to 23S rRNA. The sequence is that of Large ribosomal subunit protein uL23c (rpl23) from Tetradesmus obliquus (Green alga).